We begin with the raw amino-acid sequence, 211 residues long: ATP phosphoribosyltransferase (211 aa).

The protein belongs to the ATP phosphoribosyltransferase family. Short subfamily. As to quaternary structure, heteromultimer composed of HisG and HisZ subunits.

The protein resides in the cytoplasm. It catalyses the reaction 1-(5-phospho-beta-D-ribosyl)-ATP + diphosphate = 5-phospho-alpha-D-ribose 1-diphosphate + ATP. The protein operates within amino-acid biosynthesis; L-histidine biosynthesis; L-histidine from 5-phospho-alpha-D-ribose 1-diphosphate: step 1/9. Catalyzes the condensation of ATP and 5-phosphoribose 1-diphosphate to form N'-(5'-phosphoribosyl)-ATP (PR-ATP). Has a crucial role in the pathway because the rate of histidine biosynthesis seems to be controlled primarily by regulation of HisG enzymatic activity. This chain is ATP phosphoribosyltransferase, found in Bacillus mycoides (strain KBAB4) (Bacillus weihenstephanensis).